The following is a 231-amino-acid chain: MSEIKDVIVQGLWKNNSALVQLLGLCPLLAVTSTATNALGLGLATTLVLTLTNLTISTLRHWTPAEIRIPIYVMIIASVVSAVQMLINAYAFGLYQSLGIFIPLIVTNCIVVGRAEAFAAKKGPALSALDGFSIGMGATCAMCVLGSLREIIGNGTLFDGADALLGSWAKVLRVEIFHTDSPFLLAMLPPGAFIGLGLMLAGKYLIDERMKKRRTEAAAERALPNGETGNV.

6 helical membrane passes run 18–38 (ALVQ…ATNA), 39–59 (LGLG…ISTL), 63–83 (TPAE…VSAV), 86–106 (LINA…PLIV), 125–145 (ALSA…MCVL), and 182–202 (PFLL…MLAG).

Belongs to the NqrDE/RnfAE family. As to quaternary structure, the complex is composed of six subunits: RsxA, RsxB, RsxC, RsxD, RsxE and RsxG.

It localises to the cell inner membrane. Functionally, part of a membrane-bound complex that couples electron transfer with translocation of ions across the membrane. Required to maintain the reduced state of SoxR. This is Ion-translocating oxidoreductase complex subunit E from Escherichia coli (strain SMS-3-5 / SECEC).